The chain runs to 95 residues: Alpha-conotoxin GeXXA (95 aa).

A signal peptide spans 1 to 21; sequence MPKQEKMMLVLLILPLPYCNA. Positions 22–45 are excised as a propeptide; it reads AGVTTVQWGGHGDGLDRYLQRGVR. 4 disulfides stabilise this stretch: C64-C73, C69-C81, C74-C91, and C79-C93.

It belongs to the conotoxin D superfamily. As to quaternary structure, homodimer. Pseudo-homodimer (identical sequence, different post-translational modifications). Expressed by the venom duct.

The protein resides in the secreted. Functionally, alpha-D-conopeptides act as non-competitive inhibitors of nicotinic acetylcholine receptors (nAChR). Through its two C-terminal domains, this homodimeric protein would bind to two nAChR allosteric sites, located outside the nAChR C-loop of the principal binding face and at the adjacent binding interface in a clockwise direction. This toxin has strong inhibitory activity on rat alpha-9-alpha-10 (CHRNA9-CHRNA10) (IC(50)=1.2 nM) and a moderate inhibitory activity on human alpha-7 (CHRNA7) (IC(50)=210 nM), rat alpha-3-beta-2 (CHRNA3-CHRNB2) (IC(50)=498 nM), rat alpha-3-beta-4 (CHRNA3-CHRNB4) (IC(50)=614 nM) and rat alpha-1-beta-1-delta-epsilon (CHRNA1-CHRNB1-CHRNE-CHRND) (IC(50)=743 nM) subtypes. Shows a weaker inhibitory activity on human alpha-9-alpha-10 (IC(50)=28 nM) than on the rat channel. This is explained by a different residue in the probable binding site (His-31 in rat alpha-10 and Leu-31 in human). This chain is Alpha-conotoxin GeXXA, found in Conus generalis (General cone).